A 183-amino-acid polypeptide reads, in one-letter code: Pyruvoyl-dependent arginine decarboxylase 2 (183 aa).

Pyruvic acid (Ser) is present on Ser41.

This sequence belongs to the PdaD family. The cofactor is pyruvate.

The catalysed reaction is L-arginine + H(+) = agmatine + CO2. The polypeptide is Pyruvoyl-dependent arginine decarboxylase 2 (pdaD2) (Methanosarcina acetivorans (strain ATCC 35395 / DSM 2834 / JCM 12185 / C2A)).